Here is a 618-residue protein sequence, read N- to C-terminus: Delta-like protein 3 (618 aa).

The N-terminal stretch at 1–26 (MVSPRMSGLLSQTVILALIFLPQTRP) is a signal peptide. Residues 27 to 492 (AGVFELQIHS…LRPGDPQRYL (466 aa)) lie on the Extracellular side of the membrane. A DSL domain is found at 176–215 (ARCEPPAVGTACTRLCRPRSAPSRCGPGLRPCAPLEDECE). EGF-like domains lie at 216–249 (APLV…PLCT), 274–310 (GPGP…LRCE), 312–351 (SGVT…SNCE), 353–389 (RVDR…PRCE), 391–427 (DLDD…RDCR), and 429–465 (RADP…ARCE). Cystine bridges form between Cys220–Cys231, Cys224–Cys237, Cys239–Cys248, Cys278–Cys289, Cys283–Cys298, Cys300–Cys309, Cys316–Cys327, Cys321–Cys339, Cys341–Cys350, Cys357–Cys368, Cys362–Cys377, Cys379–Cys388, Cys395–Cys406, Cys400–Cys415, Cys417–Cys426, Cys433–Cys444, Cys438–Cys453, and Cys455–Cys464. A helical membrane pass occupies residues 493 to 513 (LPPALGLLVAAGVAGAALLLV). The Cytoplasmic segment spans residues 514–618 (HVRRRGHSQD…PYPSSILSVK (105 aa)). A compositionally biased stretch (polar residues) spans 546–562 (NLRTQEGSGDGPSSSVD). The segment at 546 to 566 (NLRTQEGSGDGPSSSVDWNRP) is disordered.

In terms of assembly, can bind and activate Notch-1 or another Notch receptor. In terms of processing, ubiquitinated by MIB (MIB1 or MIB2), leading to its endocytosis and subsequent degradation.

It is found in the membrane. Inhibits primary neurogenesis. May be required to divert neurons along a specific differentiation pathway. Plays a role in the formation of somite boundaries during segmentation of the paraxial mesoderm. This chain is Delta-like protein 3 (DLL3), found in Homo sapiens (Human).